The chain runs to 212 residues: Cytidylate kinase (212 aa).

7-15 (GPAASGKGT) lines the ATP pocket.

The protein belongs to the cytidylate kinase family. Type 1 subfamily.

The protein resides in the cytoplasm. The enzyme catalyses CMP + ATP = CDP + ADP. It carries out the reaction dCMP + ATP = dCDP + ADP. This Rhodopseudomonas palustris (strain ATCC BAA-98 / CGA009) protein is Cytidylate kinase.